The sequence spans 100 residues: Cell division protein DrpB (100 aa).

At 1–16 (MEYGSTKMEERLSRSP) the chain is on the cytoplasmic side. The helical transmembrane segment at 17–37 (GGKLALWAFYTWCGYFVWAMA) threads the bilayer. The Periplasmic segment spans residues 38–64 (RYIWVMSRIPDAPVSGFESDLGSTAGK). Residues 65-85 (WLGALVGFLFMALVGALLGSI) traverse the membrane as a helical segment. Residues 86–100 (AWYTRPRPARSRRYE) are Cytoplasmic-facing.

This sequence belongs to the DrpB family. In terms of assembly, bacterial adenylate cyclase hybrid (BACTH) studies show interaction of this protein with DamX, FtsI, FtsN, FtsQ, YmgF, DedD, FtsA and MalF, as well as weaker interactions with DedD, MalG and PBP2, but this assay often generates false positive results.

The protein localises to the cell inner membrane. Its function is as follows. A non-essential division protein that localizes to the septal ring in low ionic strength medium. Functionally, localizes to the septal ring in about 30% of observed cells before cell constriction occurs; localization occurs in low ionic strength medium (0 NaCl) and requires FtsZ but not FtsEX. Overexpression partially restores correct FtsI localization to the division septum in an ftsEX deletion. Isolated as a multicopy suppressor of an ftsEX deletion mutant; it does not suppress other cell division defects (e.g. ftsA, ftsI, ftsQ or ftsZ). The polypeptide is Cell division protein DrpB (Escherichia coli (strain K12)).